A 100-amino-acid chain; its full sequence is Urease subunit gamma (100 aa).

Belongs to the urease gamma subunit family. In terms of assembly, heterotrimer of UreA (gamma), UreB (beta) and UreC (alpha) subunits. Three heterotrimers associate to form the active enzyme.

Its subcellular location is the cytoplasm. The enzyme catalyses urea + 2 H2O + H(+) = hydrogencarbonate + 2 NH4(+). The protein operates within nitrogen metabolism; urea degradation; CO(2) and NH(3) from urea (urease route): step 1/1. The polypeptide is Urease subunit gamma (Pseudomonas aeruginosa (strain LESB58)).